A 329-amino-acid chain; its full sequence is Apolipoprotein E (329 aa).

Positions 1 to 18 (MKVLWAALVVALLAGCWA) are cleaved as a signal peptide. Tandem repeats lie at residues 92–113 (TLME…EQLG), 114–135 (PMAS…ARLR), 136–157 (SDME…AMLG), 158–179 (QSTE…KRVL), 180–201 (RDAE…EGAE), 202–223 (RSVS…TRHA), 224–245 (KVDA…QQLR), and 246–267 (GRLE…EQME). The segment at 92–267 (TLMEETMKEI…HLDEVREQME (176 aa)) is 8 X 22 AA approximate tandem repeats. M155 bears the Methionine sulfoxide mark. Residue S159 is modified to Phosphoserine. Positions 170-180 (HMRKLRKRVLR) are LDL and other lipoprotein receptors binding. 174–177 (LRKR) provides a ligand contact to heparin. A lipid-binding and lipoprotein association region spans residues 222 to 302 (HAKVDALATQ…GWFEPLVEDM (81 aa)). 241 to 248 (GQQLRGRL) is a heparin binding site. The tract at residues 278-329 (NQMRQQAEAFQARLKGWFEPLVEDMQRQWAVLVEKVQAAVGTSPTTPPVETK) is homooligomerization. Positions 290-302 (RLKGWFEPLVEDM) are specificity for association with VLDL.

Belongs to the apolipoprotein A1/A4/E family. In terms of assembly, homotetramer. May interact with ABCA1; functionally associated with ABCA1 in the biogenesis of HDLs. May interact with APP/A4 amyloid-beta peptide; the interaction is extremely stable in vitro but its physiological significance is unclear. May interact with MAPT. May interact with MAP2. In the cerebrospinal fluid, interacts with secreted SORL1. Interacts with PMEL; this allows the loading of PMEL luminal fragment on ILVs to induce fibril nucleation. In terms of processing, APOE exists as multiple glycosylated and sialylated glycoforms within cells and in plasma. The extent of glycosylation and sialylation are tissue and context specific. Post-translationally, glycated in plasma VLDL. Phosphorylated by FAM20C in the extracellular medium.

The protein localises to the secreted. It is found in the extracellular space. Its subcellular location is the extracellular matrix. It localises to the extracellular vesicle. The protein resides in the endosome. The protein localises to the multivesicular body. In terms of biological role, APOE is an apolipoprotein, a protein associating with lipid particles, that mainly functions in lipoprotein-mediated lipid transport between organs via the plasma and interstitial fluids. APOE is a core component of plasma lipoproteins and is involved in their production, conversion and clearance. Apolipoproteins are amphipathic molecules that interact both with lipids of the lipoprotein particle core and the aqueous environment of the plasma. As such, APOE associates with chylomicrons, chylomicron remnants, very low density lipoproteins (VLDL) and intermediate density lipoproteins (IDL) but shows a preferential binding to high-density lipoproteins (HDL). It also binds a wide range of cellular receptors including the LDL receptor/LDLR, the LDL receptor-related proteins LRP1, LRP2 and LRP8 and the very low-density lipoprotein receptor/VLDLR that mediate the cellular uptake of the APOE-containing lipoprotein particles. Finally, APOE also has a heparin-binding activity and binds heparan-sulfate proteoglycans on the surface of cells, a property that supports the capture and the receptor-mediated uptake of APOE-containing lipoproteins by cells. A main function of APOE is to mediate lipoprotein clearance through the uptake of chylomicrons, VLDLs, and HDLs by hepatocytes. APOE is also involved in the biosynthesis by the liver of VLDLs as well as their uptake by peripheral tissues ensuring the delivery of triglycerides and energy storage in muscle, heart and adipose tissues. By participating in the lipoprotein-mediated distribution of lipids among tissues, APOE plays a critical role in plasma and tissues lipid homeostasis. APOE is also involved in two steps of reverse cholesterol transport, the HDLs-mediated transport of cholesterol from peripheral tissues to the liver, and thereby plays an important role in cholesterol homeostasis. First, it is functionally associated with ABCA1 in the biogenesis of HDLs in tissues. Second, it is enriched in circulating HDLs and mediates their uptake by hepatocytes. APOE also plays an important role in lipid transport in the central nervous system, regulating neuron survival and sprouting. The protein is Apolipoprotein E (APOE) of Eumetopias jubatus (Steller sea lion).